The following is a 379-amino-acid chain: F-box protein At1g30200 (379 aa).

Positions 24–72 constitute an F-box domain; the sequence is DHFDLLPDSLLLLIFDKVADVKDLGRCCIVSRRFHSLVPFVENVLVRVD.

The polypeptide is F-box protein At1g30200 (Arabidopsis thaliana (Mouse-ear cress)).